The chain runs to 351 residues: Quinolinate phosphoribosyltransferase [decarboxylating] 2a, mitochondrial (351 aa).

Residues R142, 173–175, R197, K207, E240, D267, 299–301, and 320–322 contribute to the substrate site; these read TRK, SGN, and SGA.

Belongs to the NadC/ModD family. Expressed in roots and flowers.

It is found in the mitochondrion. It catalyses the reaction nicotinate beta-D-ribonucleotide + CO2 + diphosphate = quinolinate + 5-phospho-alpha-D-ribose 1-diphosphate + 2 H(+). It participates in alkaloid biosynthesis; nicotine biosynthesis. Its pathway is cofactor biosynthesis; NAD(+) biosynthesis; nicotinate D-ribonucleotide from quinolinate: step 1/1. Its function is as follows. Involved in the biosynthesis of pyridine alkaloid natural products, leading mainly to the production of anabasine, anatabine, nicotine and nornicotine, effective deterrents against herbivores with antiparasitic and pesticide properties (neurotoxins); nornicotine serves as the precursor in the synthesis of the carcinogen compound N'-nitrosonornicotine (NNN). Involved in the catabolism of quinolinic acid (QA). The polypeptide is Quinolinate phosphoribosyltransferase [decarboxylating] 2a, mitochondrial (Nicotiana tabacum (Common tobacco)).